The sequence spans 522 residues: Glutamate--cysteine ligase (522 aa).

This sequence belongs to the glutamate--cysteine ligase type 1 family. Type 1 subfamily.

The enzyme catalyses L-cysteine + L-glutamate + ATP = gamma-L-glutamyl-L-cysteine + ADP + phosphate + H(+). Its pathway is sulfur metabolism; glutathione biosynthesis; glutathione from L-cysteine and L-glutamate: step 1/2. This chain is Glutamate--cysteine ligase, found in Shewanella pealeana (strain ATCC 700345 / ANG-SQ1).